The sequence spans 100 residues: Large ribosomal subunit protein bL28 (100 aa).

Residues 1-21 (MSRVCDITGQGKSFGNKVSHS) are disordered. The span at 10 to 19 (QGKSFGNKVS) shows a compositional bias: polar residues.

This sequence belongs to the bacterial ribosomal protein bL28 family.

The polypeptide is Large ribosomal subunit protein bL28 (Ehrlichia canis (strain Jake)).